Here is a 99-residue protein sequence, read N- to C-terminus: Acylphosphatase (99 aa).

An Acylphosphatase-like domain is found at 5–97 (VRQVTVQGRV…RPGERFSTLP (93 aa)). Residues Arg20 and Asn38 contribute to the active site.

It belongs to the acylphosphatase family.

It catalyses the reaction an acyl phosphate + H2O = a carboxylate + phosphate + H(+). The chain is Acylphosphatase (acyP) from Rhodopseudomonas palustris (strain BisB18).